The sequence spans 348 residues: Short-wave-sensitive opsin 1 (348 aa).

At 1 to 33 the chain is on the extracellular side; it reads MRKMSEEEFYLFKNISSVGPWDGPQYHIAPVWA. N-linked (GlcNAc...) asparagine glycosylation is present at Asn-14. Residues 34–58 form a helical membrane-spanning segment; it reads FYLQAAFMGTVFLIGFPLNAMVLVA. Topologically, residues 59–70 are cytoplasmic; the sequence is TLRYKKLRQPLN. Residues 71–96 traverse the membrane as a helical segment; it reads YILVNVSFGGFLLCIFSVFPVFVASC. The Extracellular segment spans residues 97-110; that stretch reads NGYFVFGRHVCALE. A disulfide bond links Cys-107 and Cys-184. A helical membrane pass occupies residues 111-130; it reads GFLGTVAGLVTGWSLAFLAF. Residues 131 to 149 lie on the Cytoplasmic side of the membrane; the sequence is ERYIVICKPFGNFRFSSKH. The helical transmembrane segment at 150-173 threads the bilayer; the sequence is ALTVVLATWTIGIGVSIPPFFGWS. The Extracellular segment spans residues 174-199; sequence RFIPEGLQCSCGPDWYTVGTKYRSES. A helical membrane pass occupies residues 200-227; sequence YTWFLFIFCFIVPLSLICFSYTQLLRAL. Topologically, residues 228–249 are cytoplasmic; that stretch reads KAVAAQQQESATTQKAEREVSR. A helical membrane pass occupies residues 250-273; that stretch reads MVVVMVGSFCVCYVPYAAFAMYMV. The Extracellular segment spans residues 274–281; that stretch reads NNRNHGLD. Residues 282–306 traverse the membrane as a helical segment; the sequence is LRLVTIPSFFSKSACIYNPIIYCFM. At Lys-293 the chain carries N6-(retinylidene)lysine. The Cytoplasmic segment spans residues 307 to 348; sequence NKQFQACIMKMVCGKAMTDESDTCSSQKTEVSTVSSTQVGPN.

The protein belongs to the G-protein coupled receptor 1 family. Opsin subfamily. In terms of processing, phosphorylated on some or all of the serine and threonine residues present in the C-terminal region.

The protein localises to the cell membrane. The protein resides in the photoreceptor inner segment. It localises to the cell projection. It is found in the cilium. Its subcellular location is the photoreceptor outer segment. The protein localises to the cytoplasm. The protein resides in the perinuclear region. Visual pigments are the light-absorbing molecules that mediate vision. They consist of an apoprotein, opsin, covalently linked to cis-retinal. Required for the maintenance of cone outer segment organization in the ventral retina, but not essential for the maintenance of functioning cone photoreceptors. Involved in ensuring correct abundance and localization of retinal membrane proteins. May increase spectral sensitivity in dim light. This chain is Short-wave-sensitive opsin 1 (OPN1SW), found in Pan paniscus (Pygmy chimpanzee).